A 213-amino-acid chain; its full sequence is Pyridoxine/pyridoxamine 5'-phosphate oxidase (213 aa).

Substrate contacts are provided by residues 8-11 (RKNY) and K66. FMN-binding positions include 61 to 66 (RIVLIK), 76 to 77 (FT), R82, K83, and Q105. Substrate contacts are provided by Y123, R127, and S131. Residues 140 to 141 (QS) and W184 each bind FMN. A substrate-binding site is contributed by 190 to 192 (RLH). R194 is a binding site for FMN.

It belongs to the pyridoxamine 5'-phosphate oxidase family. Homodimer. FMN serves as cofactor.

The enzyme catalyses pyridoxamine 5'-phosphate + O2 + H2O = pyridoxal 5'-phosphate + H2O2 + NH4(+). It catalyses the reaction pyridoxine 5'-phosphate + O2 = pyridoxal 5'-phosphate + H2O2. Its pathway is cofactor metabolism; pyridoxal 5'-phosphate salvage; pyridoxal 5'-phosphate from pyridoxamine 5'-phosphate: step 1/1. It functions in the pathway cofactor metabolism; pyridoxal 5'-phosphate salvage; pyridoxal 5'-phosphate from pyridoxine 5'-phosphate: step 1/1. Functionally, catalyzes the oxidation of either pyridoxine 5'-phosphate (PNP) or pyridoxamine 5'-phosphate (PMP) into pyridoxal 5'-phosphate (PLP). This is Pyridoxine/pyridoxamine 5'-phosphate oxidase from Paraburkholderia phytofirmans (strain DSM 17436 / LMG 22146 / PsJN) (Burkholderia phytofirmans).